The primary structure comprises 453 residues: MPNIVTRFAPSPTGFLHIGGARTALFNWLYAKHHGGRFLLRIEDTDRKRSTQEAIDAIINGLKWLGVSYDGEIVYQSKRIERHIEVANLLVEKGKAYCCCCPEDKVAEKKAKAREERKIYKHKCTSVIPDAKPVVRFNVPDSQEIIVDDKIYGHIKVNSDQLDDMVILRSDNTPTYIFAVVVDDHDAGITDIIRGSDHLTNTFKQVLIYQALDFDIPRFAHVPLIHGRDGNKLSKRHGATSVCDYEKMGILPKAMRNYLLRLGWSHGNDEIISNEQAVKWFNLESIGRSPARLNFKKLEHLNNHYINNMSNEDILTLMLGESTLTNKKKNYLLQGLTELKKRANYLTELLDLAQFYIKDPPFDLSEEAEQVVKSNLDIIKLLASFLSNIGDKNWNKGFLSSQVKEFSKLHSAKISDIYHSLRAPITGVMDAPGIIDIMIILGKDECIRRLQAV.

A 'HIGH' region motif is present at residues 10–20; the sequence is PSPTGFLHIGG. The short motif at 232 to 236 is the 'KMSKS' region element; sequence KLSKR. An ATP-binding site is contributed by lysine 235.

This sequence belongs to the class-I aminoacyl-tRNA synthetase family. Glutamate--tRNA ligase type 1 subfamily. In terms of assembly, monomer.

The protein localises to the cytoplasm. The catalysed reaction is tRNA(Glu) + L-glutamate + ATP = L-glutamyl-tRNA(Glu) + AMP + diphosphate. Catalyzes the attachment of glutamate to tRNA(Glu) in a two-step reaction: glutamate is first activated by ATP to form Glu-AMP and then transferred to the acceptor end of tRNA(Glu). In Wolbachia sp. subsp. Brugia malayi (strain TRS), this protein is Glutamate--tRNA ligase 2.